The sequence spans 95 residues: MLHTLPHCASGVDFPALLRLLKEGDALLLLQDGVTVAIEGNRFLESLRDAPITVYALKEDIDARGLGGQISDSVVRVDYTEFVRLTVKYANQMAW.

Belongs to the DsrH/TusB family. Heterohexamer, formed by a dimer of trimers. The hexameric TusBCD complex contains 2 copies each of TusB, TusC and TusD. The TusBCD complex interacts with TusE.

It localises to the cytoplasm. Functionally, part of a sulfur-relay system required for 2-thiolation of 5-methylaminomethyl-2-thiouridine (mnm(5)s(2)U) at tRNA wobble positions. The protein is Protein TusB of Salmonella agona (strain SL483).